The following is a 173-amino-acid chain: Co-chaperone protein HscB homolog (173 aa).

A J domain is found at 3-75 (NPFSLFNLPV…IARATAIIEI (73 aa)).

Belongs to the HscB family. As to quaternary structure, interacts with HscA and stimulates its ATPase activity.

In terms of biological role, co-chaperone involved in the maturation of iron-sulfur cluster-containing proteins. Seems to help targeting proteins to be folded toward HscA. This chain is Co-chaperone protein HscB homolog, found in Haemophilus ducreyi (strain 35000HP / ATCC 700724).